Consider the following 367-residue polypeptide: Leucine carboxyl methyltransferase 1 (367 aa).

Residues Arg84, Gly109, Asp132, 187–188 (DL), and Glu212 each bind S-adenosyl-L-methionine.

Belongs to the methyltransferase superfamily. LCMT family.

It catalyses the reaction [phosphatase 2A protein]-C-terminal L-leucine + S-adenosyl-L-methionine = [phosphatase 2A protein]-C-terminal L-leucine methyl ester + S-adenosyl-L-homocysteine. Functionally, methylates the carboxyl group of the C-terminal leucine residue of protein phosphatase 2A catalytic subunits to form alpha-leucine ester residues. The sequence is that of Leucine carboxyl methyltransferase 1 (PPM1) from Candida albicans (strain SC5314 / ATCC MYA-2876) (Yeast).